The primary structure comprises 230 residues: Flagellar L-ring protein (230 aa).

Positions 1-18 are cleaved as a signal peptide; that stretch reads MNRLNIAVSCLATALLFG. Residue Cys-19 is the site of N-palmitoyl cysteine attachment. Cys-19 carries S-diacylglycerol cysteine lipidation.

It belongs to the FlgH family. The basal body constitutes a major portion of the flagellar organelle and consists of four rings (L,P,S, and M) mounted on a central rod.

Its subcellular location is the cell outer membrane. The protein localises to the bacterial flagellum basal body. Its function is as follows. Assembles around the rod to form the L-ring and probably protects the motor/basal body from shearing forces during rotation. In Legionella pneumophila (strain Corby), this protein is Flagellar L-ring protein.